The following is a 212-amino-acid chain: N-(5'-phosphoribosyl)anthranilate isomerase (212 aa).

The protein belongs to the TrpF family.

It carries out the reaction N-(5-phospho-beta-D-ribosyl)anthranilate = 1-(2-carboxyphenylamino)-1-deoxy-D-ribulose 5-phosphate. It functions in the pathway amino-acid biosynthesis; L-tryptophan biosynthesis; L-tryptophan from chorismate: step 3/5. This is N-(5'-phosphoribosyl)anthranilate isomerase from Roseiflexus castenholzii (strain DSM 13941 / HLO8).